We begin with the raw amino-acid sequence, 80 residues long: Exodeoxyribonuclease 7 small subunit (80 aa).

This sequence belongs to the XseB family. As to quaternary structure, heterooligomer composed of large and small subunits.

The protein localises to the cytoplasm. It carries out the reaction Exonucleolytic cleavage in either 5'- to 3'- or 3'- to 5'-direction to yield nucleoside 5'-phosphates.. Bidirectionally degrades single-stranded DNA into large acid-insoluble oligonucleotides, which are then degraded further into small acid-soluble oligonucleotides. This Rickettsia akari (strain Hartford) protein is Exodeoxyribonuclease 7 small subunit.